We begin with the raw amino-acid sequence, 434 residues long: Serine--tRNA ligase (434 aa).

An L-serine-binding site is contributed by 239–241; that stretch reads TAE. Residue 270-272 coordinates ATP; that stretch reads RSE. E293 contributes to the L-serine binding site. 357 to 360 serves as a coordination point for ATP; sequence EISS. Residue S392 participates in L-serine binding.

Belongs to the class-II aminoacyl-tRNA synthetase family. Type-1 seryl-tRNA synthetase subfamily. In terms of assembly, homodimer. The tRNA molecule binds across the dimer.

It is found in the cytoplasm. It catalyses the reaction tRNA(Ser) + L-serine + ATP = L-seryl-tRNA(Ser) + AMP + diphosphate + H(+). It carries out the reaction tRNA(Sec) + L-serine + ATP = L-seryl-tRNA(Sec) + AMP + diphosphate + H(+). The protein operates within aminoacyl-tRNA biosynthesis; selenocysteinyl-tRNA(Sec) biosynthesis; L-seryl-tRNA(Sec) from L-serine and tRNA(Sec): step 1/1. Catalyzes the attachment of serine to tRNA(Ser). Is also able to aminoacylate tRNA(Sec) with serine, to form the misacylated tRNA L-seryl-tRNA(Sec), which will be further converted into selenocysteinyl-tRNA(Sec). The sequence is that of Serine--tRNA ligase from Cupriavidus taiwanensis (strain DSM 17343 / BCRC 17206 / CCUG 44338 / CIP 107171 / LMG 19424 / R1) (Ralstonia taiwanensis (strain LMG 19424)).